The sequence spans 541 residues: Arginine--tRNA ligase (541 aa).

Positions 119–129 match the 'HIGH' region motif; it reads ANPTGPLHIGH.

The protein belongs to the class-I aminoacyl-tRNA synthetase family. Monomer.

The protein resides in the cytoplasm. The enzyme catalyses tRNA(Arg) + L-arginine + ATP = L-arginyl-tRNA(Arg) + AMP + diphosphate. The protein is Arginine--tRNA ligase of Helicobacter pylori (strain P12).